The sequence spans 177 residues: Inorganic pyrophosphatase (177 aa).

Substrate is bound by residues lysine 34, arginine 48, and tyrosine 60. Mg(2+) contacts are provided by aspartate 70, aspartate 75, and aspartate 107. Tyrosine 144 is a substrate binding site.

The protein belongs to the PPase family. Homohexamer. Mg(2+) is required as a cofactor.

The protein resides in the cytoplasm. It catalyses the reaction diphosphate + H2O = 2 phosphate + H(+). Functionally, catalyzes the hydrolysis of inorganic pyrophosphate (PPi) forming two phosphate ions. This chain is Inorganic pyrophosphatase, found in Picrophilus torridus (strain ATCC 700027 / DSM 9790 / JCM 10055 / NBRC 100828 / KAW 2/3).